The chain runs to 1165 residues: Leptin receptor (1165 aa).

A signal peptide spans 1–21 (MICQKFCVVLLHWEFIYVITA). Residues 22-839 (FNLSYPITPW…QDDIEKHQSD (818 aa)) are Extracellular-facing. 6 N-linked (GlcNAc...) asparagine glycosylation sites follow: Asn23, Asn41, Asn56, Asn73, Asn81, and Asn98. Disulfide bonds link Cys37/Cys90, Cys89/Cys99, Cys131/Cys142, Cys186/Cys196, and Cys188/Cys193. A glycan (N-linked (GlcNAc...) asparagine) is linked at Asn187. Residues Asn206, Asn276, Asn347, and Asn397 are each glycosylated (N-linked (GlcNAc...) asparagine). The region spanning 239-333 (PPLGLHMEIT…TPRVFTTQDV (95 aa)) is the Fibronectin type-III 1 domain. The region spanning 331 to 429 (QDVIYFPPKI…HRYAELYVID (99 aa)) is the Ig-like domain. 5 disulfide bridges follow: Cys352–Cys412, Cys413–Cys418, Cys436–Cys447, Cys473–Cys528, and Cys488–Cys498. Residues 467 to 484 (HRSSLYCSDIPSIHPISE) are leptin-binding. Asn516, Asn624, Asn659, Asn688, Asn697, Asn728, and Asn750 each carry an N-linked (GlcNAc...) asparagine glycan. 3 consecutive Fibronectin type-III domains span residues 539-634 (PPSS…TVVM), 639-732 (PMRG…LTFS), and 740-833 (IVQS…QDDI). The short motif at 622-626 (WSNWS) is the WSXWS motif element. A helical transmembrane segment spans residues 840 to 862 (AGLYVIVPVIISSSILLLGTLLI). At 863–1165 (SHQRMKKLFW…MENKMCDLTV (303 aa)) the chain is on the cytoplasmic side. The short motif at 871 to 879 (FWEDVPNPK) is the Box 1 motif element. Ser882 carries the post-translational modification Phosphoserine. Residues 893 to 898 (ETFEHL) form a required for JAK2 activation region. Residues 898–906 (LFIKHTASV) are required for STAT3 phosphorylation. Tyr986 bears the Phosphotyrosine; by JAK2 mark. Tyr1079 carries the post-translational modification Phosphotyrosine. Phosphotyrosine; by JAK2 is present on Tyr1141.

The protein belongs to the type I cytokine receptor family. Type 2 subfamily. In terms of assembly, present as a mixture of monomers and dimers. The phosphorylated receptor binds a number of SH2 domain-containing proteins such as JAK2, STAT3, PTPN11, and SOCS3. Interaction with SOCS3 inhibits JAK/STAT signaling and MAPK cascade. In terms of processing, on ligand binding, phosphorylated on two conserved C-terminal tyrosine residues (isoform B only) by JAK2. Tyr-986 is required for complete binding and activation of PTPN11, ERK/FOS activation,for interaction with SOCS3 and SOCS3 mediated inhibition of leptin signaling. Phosphorylation on Tyr-1141 is required for STAT3 binding/activation. Phosphorylation of Tyr-1079 has a more accessory role. As to expression, isoform A is expressed in fetal liver and in hematopoietic tissues and choroid plexus. In adults highest expression in heart, liver, small intestine, prostate and ovary. Low level in lung and kidney. Isoform B is highly expressed in hypothalamus, but also in skeletal muscle. Detected in fundic and antral epithelial cells of the gastric mucosa. Isoform B and isoform A are expressed by NK cells (at protein level).

It is found in the cell membrane. The protein resides in the basolateral cell membrane. It localises to the secreted. Functionally, receptor for hormone LEP/leptin. On ligand binding, mediates LEP central and peripheral effects through the activation of different signaling pathways such as JAK2/STAT3 and MAPK cascade/FOS. In the hypothalamus, LEP acts as an appetite-regulating factor that induces a decrease in food intake and an increase in energy consumption by inducing anorexinogenic factors and suppressing orexigenic neuropeptides, also regulates bone mass and secretion of hypothalamo-pituitary-adrenal hormones. In the periphery, increases basal metabolism, influences reproductive function, regulates pancreatic beta-cell function and insulin secretion, is pro-angiogenic and affects innate and adaptive immunity. Control of energy homeostasis and melanocortin production (stimulation of POMC and full repression of AgRP transcription) is mediated by STAT3 signaling, whereas distinct signals regulate NPY and the control of fertility, growth and glucose homeostasis. Involved in the regulation of counter-regulatory response to hypoglycemia by inhibiting neurons of the parabrachial nucleus. Has a specific effect on T lymphocyte responses, differentially regulating the proliferation of naive and memory T -ells. Leptin increases Th1 and suppresses Th2 cytokine production. May transport LEP across the blood-brain barrier. Binds LEP and mediates LEP endocytosis. Does not induce phosphorylation of and activate STAT3. Its function is as follows. Antagonizes Isoform A and isoform B-mediated LEP binding and endocytosis. The polypeptide is Leptin receptor (LEPR) (Homo sapiens (Human)).